The primary structure comprises 193 residues: uncharacterized protein (193 aa).

The segment at 158 to 193 (YNPIYDDHNPLPPEKKKSILSRTRSTKLSSGEITPV) is disordered. Positions 162 to 174 (YDDHNPLPPEKKK) are enriched in basic and acidic residues. Polar residues predominate over residues 177 to 193 (LSRTRSTKLSSGEITPV).

This is an uncharacterized protein from Micromonas pusilla (Picoplanktonic green alga).